Consider the following 566-residue polypeptide: Arginine--tRNA ligase (566 aa).

The 'HIGH' region motif lies at 123-133 (PNIAKPFHIGH).

It belongs to the class-I aminoacyl-tRNA synthetase family. In terms of assembly, monomer.

Its subcellular location is the cytoplasm. The enzyme catalyses tRNA(Arg) + L-arginine + ATP = L-arginyl-tRNA(Arg) + AMP + diphosphate. In Clostridioides difficile (strain 630) (Peptoclostridium difficile), this protein is Arginine--tRNA ligase.